The chain runs to 1250 residues: Protein SSD1 (1250 aa).

Positions Met1–Thr22 are enriched in polar residues. Residues Met1 to Gln32 form a disordered region. Ser2 carries the N-acetylserine modification. Residue Ser40 is modified to Phosphoserine. The interval Thr79–His163 is disordered. Over residues Ser84 to Thr94 the composition is skewed to polar residues. Low complexity predominate over residues Asn124–Asn145. Ser164 and Ser183 each carry phosphoserine. The span at Gln197–Gln208 shows a compositional bias: polar residues. Disordered stretches follow at residues Gln197 to Lys338, Lys418 to Asp443, and Ser455 to Glu517. Position 227 is a phosphothreonine (Thr227). Positions Asn264–Asn276 are enriched in polar residues. The segment covering Gln277–Pro287 has biased composition (low complexity). Residues Ser286 and Ser322 each carry the phosphoserine modification. Positions Ser319–Gln329 are enriched in polar residues. Positions Ser481 to Lys495 are enriched in polar residues. A phosphoserine mark is found at Ser491 and Ser492. Basic residues predominate over residues Gly497 to Gln510. The region spanning Ala582 to Asn657 is the CSD2 domain. Phosphotyrosine is present on Tyr688. The region spanning Asp694–His1015 is the RNB domain. Positions Gly1064–Ala1148 constitute a DIS3L2 C-terminal domain.

The protein belongs to the RNR ribonuclease family.

Its function is as follows. Can suppress the lethality due to deletion of SIT4, and partially the defects due to BCY1 disruption. Is implicated in the control of the cell cycle G1 phase. This Saccharomyces cerevisiae (strain ATCC 204508 / S288c) (Baker's yeast) protein is Protein SSD1 (SSD1).